A 326-amino-acid polypeptide reads, in one-letter code: Protein-ribulosamine 3-kinase, chloroplastic (326 aa).

The N-terminal 30 residues, 1–30, are a transit peptide targeting the chloroplast; the sequence is MAVASLSICFSARPHLLLRNFSPRPKFVAM. 125–127 provides a ligand contact to ATP; sequence EFI. Residue aspartate 230 is the Proton acceptor of the active site.

Belongs to the fructosamine kinase family.

Its subcellular location is the plastid. It localises to the chloroplast. It carries out the reaction N(6)-D-ribulosyl-L-lysyl-[protein] + ATP = N(6)-(3-O-phospho-D-ribulosyl)-L-lysyl-[protein] + ADP + H(+). The enzyme catalyses N(6)-(D-erythrulosyl)-L-lysyl-[protein] + ATP = N(6)-(3-O-phospho-D-erythrulosyl)-L-lysyl-[protein] + ADP + H(+). Functionally, initiates a process leading to the deglycation of proteins. Phosphorylates low-molecular-mass and protein-bound erythrulosamines and ribulosamines, but not fructosamines or psicosamines, on the third carbon of the sugar moiety. Protein-bound erythrulosamine 3-phosphates and ribulosamine 3-phosphates are unstable and decompose under physiological conditions. The polypeptide is Protein-ribulosamine 3-kinase, chloroplastic (Arabidopsis thaliana (Mouse-ear cress)).